The primary structure comprises 580 residues: Dihydroxy-acid dehydratase (580 aa).

Residues 1 to 31 (MPSGSSESPADALRASDSTPDIKPRSRDVTD) are disordered. The span at 20-31 (PDIKPRSRDVTD) shows a compositional bias: basic and acidic residues. C69 is a [2Fe-2S] cluster binding site. D101 serves as a coordination point for Mg(2+). C142 contacts [2Fe-2S] cluster. Mg(2+) contacts are provided by D143 and K144. An N6-carboxylysine modification is found at K144. C219 is a [2Fe-2S] cluster binding site. A Mg(2+)-binding site is contributed by E470. S496 serves as the catalytic Proton acceptor.

It belongs to the IlvD/Edd family. In terms of assembly, homodimer. The cofactor is [2Fe-2S] cluster. Requires Mg(2+) as cofactor.

The catalysed reaction is (2R)-2,3-dihydroxy-3-methylbutanoate = 3-methyl-2-oxobutanoate + H2O. The enzyme catalyses (2R,3R)-2,3-dihydroxy-3-methylpentanoate = (S)-3-methyl-2-oxopentanoate + H2O. The protein operates within amino-acid biosynthesis; L-isoleucine biosynthesis; L-isoleucine from 2-oxobutanoate: step 3/4. Its pathway is amino-acid biosynthesis; L-valine biosynthesis; L-valine from pyruvate: step 3/4. Its function is as follows. Functions in the biosynthesis of branched-chain amino acids. Catalyzes the dehydration of (2R,3R)-2,3-dihydroxy-3-methylpentanoate (2,3-dihydroxy-3-methylvalerate) into 2-oxo-3-methylpentanoate (2-oxo-3-methylvalerate) and of (2R)-2,3-dihydroxy-3-methylbutanoate (2,3-dihydroxyisovalerate) into 2-oxo-3-methylbutanoate (2-oxoisovalerate), the penultimate precursor to L-isoleucine and L-valine, respectively. This chain is Dihydroxy-acid dehydratase, found in Mycobacterium sp. (strain JLS).